The sequence spans 1049 residues: Solvent-resistant pump membrane transporter SrpB (1049 aa).

12 helical membrane passes run 10-30 (IFAWVLAIVAMLAGALSLAKM), 339-359 (SVVHTIFEAVVLVFLVMYLFL), 366-386 (LIPTLAVPVVLLATFALLPYF), 392-412 (VLTMYAMVLAIGLLVDDAIVV), 440-460 (GALVGIGMVLSAVFVPMAFFG), 470-490 (FAITIVVCMGLSILVALVFTP), 542-562 (LAFLLITGGTGYLFTQIPKAF), 871-891 (APLLYALTVLIVFLCLAALYE), 895-915 (VPVSVIMVVPLGILGAVLATL), 927-947 (VGLMTTVGLSAKNAILIVEFA), 973-993 (ILMTSLAFTFGVLPMAIASGA), and 1008-1028 (GMITATVLAVFFVPLFYVVVV).

This sequence belongs to the resistance-nodulation-cell division (RND) (TC 2.A.6) family.

The protein resides in the cell inner membrane. The inner membrane transporter component of an organic solvent efflux pump. Involved in export of a number of low log POW compounds including hexane (log POW 3.5), toluene (log POW 2.5) and dimethylphthalate (log POW 2.3). The solvent resistance phenotype has been postulated to depend on the operon expression level. The polypeptide is Solvent-resistant pump membrane transporter SrpB (srpB) (Pseudomonas putida (Arthrobacter siderocapsulatus)).